We begin with the raw amino-acid sequence, 504 residues long: ATP synthase subunit alpha (504 aa).

171-178 is an ATP binding site; that stretch reads GDRATGKT.

The protein belongs to the ATPase alpha/beta chains family. As to quaternary structure, F-type ATPases have 2 components, CF(1) - the catalytic core - and CF(0) - the membrane proton channel. CF(1) has five subunits: alpha(3), beta(3), gamma(1), delta(1), epsilon(1). CF(0) has three main subunits: a(1), b(2) and c(9-12). The alpha and beta chains form an alternating ring which encloses part of the gamma chain. CF(1) is attached to CF(0) by a central stalk formed by the gamma and epsilon chains, while a peripheral stalk is formed by the delta and b chains.

Its subcellular location is the cell inner membrane. The enzyme catalyses ATP + H2O + 4 H(+)(in) = ADP + phosphate + 5 H(+)(out). Produces ATP from ADP in the presence of a proton gradient across the membrane. The alpha chain is a regulatory subunit. The polypeptide is ATP synthase subunit alpha (Sulfurihydrogenibium sp. (strain YO3AOP1)).